The primary structure comprises 393 residues: MTTFDRGEKPDIGTLVAFDHVRFVVGNAKQAAYWYCANFGFEPFAYKGLETGSRITAQHAIKQDKIVFVFESALLPDNTELGEHLVQHGDGVKDVCFEVEDLDSIVAHAKAAGATIVRDITEESDENGSVRFATLRTYGETDHTLLERKKYKGAFLPGFKPHPMPPTFFHSLPRVGLNFLDHCVGNQPDLQMAPAVEWYENILKFHRFWSVDDSMIHTEYSALRSIVVTNFEETIKMPINEPASSNKKAVSQIQEFVDYYGGSGVQHIALNTTDIITAIEALRARGCEFLSIPSSYYDNLRQRLSVSSMKIKEDMDRLQKLHILVDFDENGYLLQIFSKPCQDRPTLFLEIIQRQNHQGFGAGNFKALFESIELEQTKRGNLFYENVKDGQHK.

VOC domains are found at residues 17–148 (AFDH…LLER) and 179–339 (FLDH…IFSK). Residues histidine 182, histidine 267, and glutamate 350 each contribute to the Fe cation site.

Belongs to the 4HPPD family. The cofactor is Fe cation.

It catalyses the reaction 3-(4-hydroxyphenyl)pyruvate + O2 = homogentisate + CO2. Its pathway is amino-acid degradation; L-phenylalanine degradation; acetoacetate and fumarate from L-phenylalanine: step 3/6. Key enzyme in the degradation of tyrosine. This is 4-hydroxyphenylpyruvate dioxygenase (hpd-1) from Caenorhabditis briggsae.